The following is a 351-amino-acid chain: Protein pelota homolog (351 aa).

It belongs to the eukaryotic release factor 1 family. Pelota subfamily. As to quaternary structure, monomer. It depends on a divalent metal cation as a cofactor.

It is found in the cytoplasm. Functionally, may function in recognizing stalled ribosomes, interact with stem-loop structures in stalled mRNA molecules, and effect endonucleolytic cleavage of the mRNA. May play a role in the release non-functional ribosomes and degradation of damaged mRNAs. Has endoribonuclease activity. This Methanosphaera stadtmanae (strain ATCC 43021 / DSM 3091 / JCM 11832 / MCB-3) protein is Protein pelota homolog.